Consider the following 365-residue polypeptide: tRNA(Met) cytidine acetate ligase (365 aa).

Residues 7–20, G96, N152, and R175 contribute to the ATP site; that span reads IAEFNPFHNGHKYL.

This sequence belongs to the TmcAL family.

It is found in the cytoplasm. It catalyses the reaction cytidine(34) in elongator tRNA(Met) + acetate + ATP = N(4)-acetylcytidine(34) in elongator tRNA(Met) + AMP + diphosphate. Catalyzes the formation of N(4)-acetylcytidine (ac(4)C) at the wobble position of elongator tRNA(Met), using acetate and ATP as substrates. First activates an acetate ion to form acetyladenylate (Ac-AMP) and then transfers the acetyl group to tRNA to form ac(4)C34. This Streptococcus pneumoniae (strain P1031) protein is tRNA(Met) cytidine acetate ligase.